We begin with the raw amino-acid sequence, 161 residues long: Phosphopantetheine adenylyltransferase (161 aa).

Thr-9 is a binding site for substrate. ATP-binding positions include 9–10 and His-17; that span reads TF. Positions 41, 73, and 87 each coordinate substrate. ATP contacts are provided by residues 88–90, Glu-98, and 123–129; these read GLR and YQFISGT.

The protein belongs to the bacterial CoaD family. In terms of assembly, homohexamer. Mg(2+) serves as cofactor.

It is found in the cytoplasm. The enzyme catalyses (R)-4'-phosphopantetheine + ATP + H(+) = 3'-dephospho-CoA + diphosphate. It participates in cofactor biosynthesis; coenzyme A biosynthesis; CoA from (R)-pantothenate: step 4/5. Reversibly transfers an adenylyl group from ATP to 4'-phosphopantetheine, yielding dephospho-CoA (dPCoA) and pyrophosphate. The protein is Phosphopantetheine adenylyltransferase of Janthinobacterium sp. (strain Marseille) (Minibacterium massiliensis).